A 260-amino-acid chain; its full sequence is 5-oxoprolinase subunit A 2 (260 aa).

Belongs to the LamB/PxpA family. Forms a complex composed of PxpA, PxpB and PxpC.

It catalyses the reaction 5-oxo-L-proline + ATP + 2 H2O = L-glutamate + ADP + phosphate + H(+). Its function is as follows. Catalyzes the cleavage of 5-oxoproline to form L-glutamate coupled to the hydrolysis of ATP to ADP and inorganic phosphate. This is 5-oxoprolinase subunit A 2 from Ralstonia nicotianae (strain ATCC BAA-1114 / GMI1000) (Ralstonia solanacearum).